A 156-amino-acid chain; its full sequence is Ribosome maturation factor RimP (156 aa).

It belongs to the RimP family.

The protein localises to the cytoplasm. Required for maturation of 30S ribosomal subunits. This is Ribosome maturation factor RimP from Anoxybacillus flavithermus (strain DSM 21510 / WK1).